A 1339-amino-acid polypeptide reads, in one-letter code: MADMSIPLHSLRFNNMMKEENGDPQNRGATFSRPMTETRAEVQILHSQLQLPVVSTSASDLEGTSTQLMTSPGFDSLSTPLMGAPHSGTLSPPLMSASDSGTLSPLLMPASDSGTLSPLLMPVSDSGTLSPLLMPASDSGTLSPLLSTSDYGLMSPGMMSIPDFGTMSSLMAAPDSAEISPLAMPIQSSGVISAPIMSTSSSEASLMLGSDPGEISPLLIPDMNPGVTSTPPMTAPGSEAMSPLQITDEDTEAMSKVLMTALASGEISSLLMSGTDSEAISSLIMSALASGETPAQPTNPPESEGIPTVLMSGSDSAVMSSLPMPVSGSGAMPTPLLSIPDAGEIATLPKPVPDVEAMSPLLMTALTSTVMPSQLISASSSGVMSPDTTQNINSEVMSAPPIRVSSTGLMSTLPVRASDTAATPIQLMRVPASGNMSTSQKTVPVSGSMSTPLMAVTSPGAIFTEQMPSTASGTMSTHLTMPQTPGTMPIGFMKSTSNGAVSAQQIRCSVSGMMSTQPVIATASEIMSVSQSTVPTSGSVSTQKTRAPVSGPMSTTQIRTTASALTSTPQMRATASGTMSIPLMTAKTSGSASTLLMRDTASGVISVPQMRAPGSGTVSKPLMTSKASGMFMQQMTTAAFGATPTSLMRDTASGGLSMPQMTDPASGGMSTLLTRATASGTKSTSQMTATTSGGIFMPQTRLSGPGATSTPLMRATASEKMPSQAMNIQDSGGVSTPLMRPVALGGVQMRSQGSGTMSTPLLRASDSSEMSMLLTKAPSSGERPLLLVRPPASGEIAPHSRTPVYGTISAPHMTTTASGVMTMSPMKTSVPVSESATLLRPTDSGVMSIPLTRTPASRAKSRPQMATACGDMCPLPVRAPATAGISPSPVRSPASSTLSTLLRRPSDGAVTAELERVLGPAQFAAMTPGEMSKPLMRASAPGTTTMPLMSPMTSGEMSMPLMKTTPSGTMSTLQTKVMSSRATSLPQPRNAASGVIANPPQRAPASGAGSTPLMRVSGSGMMSTPLLGATASGGMSMPQMAPPTSGDMFSPLMRSPAPGIMSTPQTAFGMTPTLNVKATDSGEASTSHTRFTAPGSKSTPHMTSTAPEMKTPPPKEVPSFGMLTPALCYLLEEQEAARGSSSVEEDAEEIDEEKQMKGFLDDSEKMAFLVSLHLGAAERWSILQMEVGNPISSDNKAFLRRSQGLYDSLSEIDILSAVLCHPKQGKKSVRQYATDFLLLARHLSWSDAILRTRFLEGLSEAVTTKMGRIFLKVAGSLKELIDRSLYTECQLAEEKDSSGNSNQVVPTSCKRNNEEAMENELGSQQQTEEVIKGTYAHGF.

3 stretches are compositionally biased toward polar residues: residues 533-545, 679-693, and 700-711; these read TVPT…TQKT, SGTK…TTSG, and TRLSGPGATSTP. Disordered regions lie at residues 533-555, 679-711, 845-864, 880-901, 982-1010, and 1078-1116; these read TVPT…PMST, SGTK…TSTP, GVMS…SRPQ, PATA…LSTL, ATSL…GAGS, and ATDS…PPKE. Low complexity predominate over residues 891–901; that stretch reads RSPASSTLSTL. The span at 1078-1106 shows a compositional bias: polar residues; it reads ATDSGEASTSHTRFTAPGSKSTPHMTSTA.

The chain is Retrotransposon Gag-like protein 9 from Mus musculus (Mouse).